Here is a 634-residue protein sequence, read N- to C-terminus: Protection of telomeres protein 1 (634 aa).

DNA-binding stretches follow at residues 33-48 and 270-273; these read KPPY…SVVT and SYGR.

This sequence belongs to the telombin family. In terms of assembly, homodimer or homooligomer. Component of the shelterin complex (telosome) composed of TERF1, TERF2, TINF2, TERF2IP, ACD and POT1. Binds single-stranded telomeric DNA as a monomer. Associated component of the telomerase holoenzyme complex. Found in a complex with TERF1, TINF2 and TNKS1. Interacts with TNKS1. Forms heterodimers with ACD. Identified in a complex with ACD and single-stranded telomeric DNA. Ubiquitous.

Its subcellular location is the nucleus. It localises to the chromosome. It is found in the telomere. In terms of biological role, component of the telomerase ribonucleoprotein (RNP) complex that is essential for the replication of chromosome termini. Is a component of the double-stranded telomeric DNA-binding TRF1 complex which is involved in the regulation of telomere length by cis-inhibition of telomerase. Also acts as a single-stranded telomeric DNA-binding protein and thus may act as a downstream effector of the TRF1 complex and may transduce information about telomere maintenance and/or length to the telomere terminus. Component of the shelterin complex (telosome) that is involved in the regulation of telomere length and protection. Shelterin associates with arrays of double-stranded TTAGGG repeats added by telomerase and protects chromosome ends; without its protective activity, telomeres are no longer hidden from the DNA damage surveillance and chromosome ends are inappropriately processed by DNA repair pathways. Binds to two or more telomeric single-stranded 5'-TTAGGG-3' repeats (G-strand) and with high specificity to a minimal telomeric single-stranded 5'-TAGGGTTAG-3' sequence. Binds telomeric single-stranded sequences internally or at proximity of a 3'-end. Its activity is TERT dependent but it does not increase TERT activity by itself. In contrast, the ACD-POT1 heterodimer enhances telomere elongation by increasing telomerase processivity. The polypeptide is Protection of telomeres protein 1 (POT1) (Homo sapiens (Human)).